Consider the following 168-residue polypeptide: Endoribonuclease YbeY (168 aa).

3 residues coordinate Zn(2+): H122, H126, and H132.

Belongs to the endoribonuclease YbeY family. It depends on Zn(2+) as a cofactor.

The protein localises to the cytoplasm. Its function is as follows. Single strand-specific metallo-endoribonuclease involved in late-stage 70S ribosome quality control and in maturation of the 3' terminus of the 16S rRNA. This chain is Endoribonuclease YbeY, found in Brucella abortus (strain 2308).